A 197-amino-acid chain; its full sequence is Ribosome maturation factor RimP (197 aa).

Belongs to the RimP family.

Its subcellular location is the cytoplasm. Functionally, required for maturation of 30S ribosomal subunits. This chain is Ribosome maturation factor RimP, found in Acidovorax ebreus (strain TPSY) (Diaphorobacter sp. (strain TPSY)).